We begin with the raw amino-acid sequence, 138 residues long: ATP synthase epsilon chain (138 aa).

This sequence belongs to the ATPase epsilon chain family. In terms of assembly, F-type ATPases have 2 components, CF(1) - the catalytic core - and CF(0) - the membrane proton channel. CF(1) has five subunits: alpha(3), beta(3), gamma(1), delta(1), epsilon(1). CF(0) has three main subunits: a, b and c.

It is found in the cell inner membrane. In terms of biological role, produces ATP from ADP in the presence of a proton gradient across the membrane. This is ATP synthase epsilon chain from Citrifermentans bemidjiense (strain ATCC BAA-1014 / DSM 16622 / JCM 12645 / Bem) (Geobacter bemidjiensis).